We begin with the raw amino-acid sequence, 407 residues long: Carbamoyl phosphate synthase small chain (407 aa).

The tract at residues 1 to 205 (MTETTSKTAP…LADGYGEQDT (205 aa)) is CPSase. Residues serine 60, glycine 257, and glycine 259 each coordinate L-glutamine. Residues 209 to 397 (HVVALDFGVK…INLIREKKGE (189 aa)) enclose the Glutamine amidotransferase type-1 domain. Cysteine 286 acts as the Nucleophile in catalysis. Residues leucine 287, glutamine 290, asparagine 328, glycine 330, and phenylalanine 331 each contribute to the L-glutamine site. Active-site residues include histidine 370 and glutamate 372.

It belongs to the CarA family. As to quaternary structure, composed of two chains; the small (or glutamine) chain promotes the hydrolysis of glutamine to ammonia, which is used by the large (or ammonia) chain to synthesize carbamoyl phosphate. Tetramer of heterodimers (alpha,beta)4.

It catalyses the reaction hydrogencarbonate + L-glutamine + 2 ATP + H2O = carbamoyl phosphate + L-glutamate + 2 ADP + phosphate + 2 H(+). The catalysed reaction is L-glutamine + H2O = L-glutamate + NH4(+). It participates in amino-acid biosynthesis; L-arginine biosynthesis; carbamoyl phosphate from bicarbonate: step 1/1. It functions in the pathway pyrimidine metabolism; UMP biosynthesis via de novo pathway; (S)-dihydroorotate from bicarbonate: step 1/3. Functionally, small subunit of the glutamine-dependent carbamoyl phosphate synthetase (CPSase). CPSase catalyzes the formation of carbamoyl phosphate from the ammonia moiety of glutamine, carbonate, and phosphate donated by ATP, constituting the first step of 2 biosynthetic pathways, one leading to arginine and/or urea and the other to pyrimidine nucleotides. The small subunit (glutamine amidotransferase) binds and cleaves glutamine to supply the large subunit with the substrate ammonia. The protein is Carbamoyl phosphate synthase small chain of Brucella anthropi (strain ATCC 49188 / DSM 6882 / CCUG 24695 / JCM 21032 / LMG 3331 / NBRC 15819 / NCTC 12168 / Alc 37) (Ochrobactrum anthropi).